Reading from the N-terminus, the 432-residue chain is Glutamyl-tRNA reductase (432 aa).

Residues 55 to 58 (TCNR), S114, 119 to 121 (ETQ), and Q125 contribute to the substrate site. The active-site Nucleophile is C56. NADP(+) is bound at residue 194–199 (GAGEMI).

This sequence belongs to the glutamyl-tRNA reductase family. Homodimer.

The enzyme catalyses (S)-4-amino-5-oxopentanoate + tRNA(Glu) + NADP(+) = L-glutamyl-tRNA(Glu) + NADPH + H(+). Its pathway is porphyrin-containing compound metabolism; protoporphyrin-IX biosynthesis; 5-aminolevulinate from L-glutamyl-tRNA(Glu): step 1/2. Its function is as follows. Catalyzes the NADPH-dependent reduction of glutamyl-tRNA(Glu) to glutamate 1-semialdehyde (GSA). The chain is Glutamyl-tRNA reductase from Burkholderia multivorans (strain ATCC 17616 / 249).